Reading from the N-terminus, the 1904-residue chain is Callose synthase 10 (1904 aa).

One copy of the HAT 1 repeat lies at 100 to 132 (VIKQKLAKRDGASIDRDRDIERLWEFYKLYKRR). Helical transmembrane passes span 491 to 511 (SFIR…IIAF), 532 to 552 (AIMN…AYSM), 562 to 582 (VIRF…YVKV), 594 to 614 (FFFH…LIFG), 661 to 681 (YVAF…FLQI), and 722 to 742 (VLAI…AIIG). The stretch at 678–701 (FLQIKPLVKPTNTIIHLPPFQYSW) is one LRR 1 repeat. 2 LRR repeats span residues 751–774 (LGEI…FAQN) and 925–948 (TLNL…LIRN). One copy of the HAT 2 repeat lies at 1074–1107 (YSSSELRSENEDGISILFYLQKIFPDEWENFLER). The stretch at 1159 to 1181 (FLERRGLGVDDASLTNMPRGFES) is one LRR 4 repeat. 9 helical membrane passes run 1474–1494 (FTTV…YVFL), 1529–1549 (FLVQ…ILEL), 1554–1574 (AIFS…TFSL), 1621–1641 (AFEV…DGGA), 1644–1664 (FVLL…APYI), 1747–1767 (LALY…FKLF), 1783–1803 (FLQG…IAMT), 1811–1831 (FACV…AITW), and 1853–1873 (AAMG…PFIS). The HAT 3 repeat unit spans residues 1659-1691 (LFAPYIFNPSGFEWQKTVEDFEDWVSWLMYKGG).

Belongs to the glycosyltransferase 48 family.

Its subcellular location is the cell membrane. It carries out the reaction [(1-&gt;3)-beta-D-glucosyl](n) + UDP-alpha-D-glucose = [(1-&gt;3)-beta-D-glucosyl](n+1) + UDP + H(+). Its function is as follows. Involved in sporophytic and gametophytic development. Required for normal plant development and for the proper accumulation of callose at cell plates, cll walls and plasmodesmata. During pollen formation, required for the entry of microspores into mitosis. During plant growth and development, callose is found as a transitory component of the cell plate in dividing cells, is a major component of pollen mother cell walls and pollen tubes, and is found as a structural component of plasmodesmatal canals. Required for proper cell division and tissue patterning throughout plant organs, including stomatal patterning. This chain is Callose synthase 10 (CALS10), found in Arabidopsis thaliana (Mouse-ear cress).